The primary structure comprises 504 residues: Maturase K (504 aa).

It belongs to the intron maturase 2 family. MatK subfamily.

The protein localises to the plastid. The protein resides in the chloroplast. Functionally, usually encoded in the trnK tRNA gene intron. Probably assists in splicing its own and other chloroplast group II introns. In Lupinus argenteus (Silvery lupine), this protein is Maturase K.